The chain runs to 271 residues: Thiosulfate sulfurtransferase (271 aa).

Rhodanese domains lie at 21 to 129 and 159 to 270; these read SAPE…PLSR and GAAD…TPVE. The active-site Cysteine persulfide intermediate is Cys-230. Substrate is bound at residue Arg-235.

Its subcellular location is the cytoplasm. The enzyme catalyses thiosulfate + hydrogen cyanide = thiocyanate + sulfite + 2 H(+). The sequence is that of Thiosulfate sulfurtransferase (rhdA) from Azotobacter vinelandii.